Reading from the N-terminus, the 415-residue chain is Intron-encoded DNA endonuclease aI3 (415 aa).

The segment at 1–81 (MVQRWLYSTN…MPALIGGFGN (81 aa)) is COX1 exons 1 to 3 encoded. A run of 2 helical transmembrane segments spans residues 16 to 36 (VLYF…SLII) and 57 to 77 (VLVV…ALIG). The segment at 82–415 (QKRYESNNNN…HLKNTYLENK (334 aa)) is COX1 intron 3 encoded.

This sequence in the C-terminal section; belongs to the LAGLIDADG endonuclease family. The cofactor is Mg(2+). The mature protein may arise from proteolytic cleavage of an in-frame translation of some COX1 exons plus the intron containing the aI3 open reading frame.

It localises to the mitochondrion. The protein localises to the membrane. Its function is as follows. Mitochondrial DNA endonuclease involved in intron homing. It introduces a specific double-strand break in the DNA of the COX1 gene and thus mediates the insertion of an intron, containing its own coding sequence (group I intron), into an intronless gene. Recognizes with high specificity and cleaves the sequence 5'-GGTTTTGGTAACTATTTATTAC-3'. This Saccharomyces cerevisiae (strain ATCC 204508 / S288c) (Baker's yeast) protein is Intron-encoded DNA endonuclease aI3 (AI3).